A 104-amino-acid polypeptide reads, in one-letter code: Type IV secretion system protein PtlB homolog (104 aa).

A helical membrane pass occupies residues 30-50; that stretch reads IALLGIWFSIAFLALFPVALL.

This sequence belongs to the virB3 family.

It localises to the cell membrane. This is Type IV secretion system protein PtlB homolog (ptlB) from Bordetella bronchiseptica (strain ATCC BAA-588 / NCTC 13252 / RB50) (Alcaligenes bronchisepticus).